A 352-amino-acid chain; its full sequence is Forkhead box protein D5 (352 aa).

Disordered stretches follow at residues 1-32 and 47-92; these read MSLS…LGED and HSEM…GKAK. Positions 20–32 are enriched in acidic residues; it reads SDEEDEIDILGED. The span at 73–82 shows a compositional bias: low complexity; sequence ESEGGTSKDS. Positions 97-191 form a DNA-binding region, fork-head; that stretch reads KPPYSYIALI…DNGSFLRRRK (95 aa).

As to expression, expression begins in the newly forming dorsal mesoderm and is maintained during gastrulation at the dorsal blastopore lip (Spemann organizer). At the early neurula stages, expressed in a row of cells along the dorsal midline that are destined to become the fllor plate of the neural tube. At late neurula, expressed within the anterior and posterior poles of the embryo. After neural closure, expression is detected only in the tailtip, the otic vesicle and at the midbrain/hindbrain boundary.

The protein localises to the nucleus. Its function is as follows. Transcriptional repressor. The polypeptide is Forkhead box protein D5 (Xenopus tropicalis (Western clawed frog)).